Consider the following 194-residue polypeptide: Holliday junction branch migration complex subunit RuvA (194 aa).

The tract at residues 1-61 (MYDFLTGIIK…DNQISLYGFK (61 aa)) is domain I. Positions 62–139 (TVKERNLFQK…GDFSKNIAPM (78 aa)) are domain II. The segment at 139–143 (MKNLL) is flexible linker. The segment at 144–194 (ENSAELDDALAALVALGFSSKEVNKINPKLASLGELTTDAYIQKGLKLLTK) is domain III.

This sequence belongs to the RuvA family. In terms of assembly, homotetramer. Forms an RuvA(8)-RuvB(12)-Holliday junction (HJ) complex. HJ DNA is sandwiched between 2 RuvA tetramers; dsDNA enters through RuvA and exits via RuvB. An RuvB hexamer assembles on each DNA strand where it exits the tetramer. Each RuvB hexamer is contacted by two RuvA subunits (via domain III) on 2 adjacent RuvB subunits; this complex drives branch migration. In the full resolvosome a probable DNA-RuvA(4)-RuvB(12)-RuvC(2) complex forms which resolves the HJ.

The protein resides in the cytoplasm. The RuvA-RuvB-RuvC complex processes Holliday junction (HJ) DNA during genetic recombination and DNA repair, while the RuvA-RuvB complex plays an important role in the rescue of blocked DNA replication forks via replication fork reversal (RFR). RuvA specifically binds to HJ cruciform DNA, conferring on it an open structure. The RuvB hexamer acts as an ATP-dependent pump, pulling dsDNA into and through the RuvAB complex. HJ branch migration allows RuvC to scan DNA until it finds its consensus sequence, where it cleaves and resolves the cruciform DNA. The sequence is that of Holliday junction branch migration complex subunit RuvA from Oenococcus oeni (strain ATCC BAA-331 / PSU-1).